The primary structure comprises 50 residues: Nosiheptide precursor (50 aa).

Residues S38–C39 constitute a cross-link (thiazole-4-carboxylic acid (Ser-Cys)). Positions S38 to C46 form a cross-link, 3-hydroxypyridine-2,5-dicarboxylic acid (Ser-Cys) (with S-47). A cross-link (3-hydroxypyridine-2,5-dicarboxylic acid (Ser-Ser) (with C-46)) is located at residues S38–S47. Positions T41–C42 form a cross-link, thiazole-4-carboxylic acid (Thr-Cys). E43 carries the post-translational modification 4-hydroxyglutamate. The segment at residues E43–C44 is a cross-link (thiazole-4-carboxylic acid (Glu-Cys)). Positions E43–C45 form a cross-link, 2-(cystein-S-ylcarbonyl)-3-methyl-4-(glutam-5-yloxy)methylindole (Glu-Cys). The thiazole-4-carboxylic acid (Cys-Cys) cross-link spans C45–C46. Positions S47–C48 form a cross-link, thiazole-4-carboxylic acid (Ser-Cys). S49 carries the post-translational modification 2,3-didehydroalanine (Ser). S49 bears the Serine amide; atypical mark.

This sequence belongs to the thiocillin family. Post-translationally, the amidation of Ser-49 is produced by the oxidative cleavage of Ser-50 rather than of a glycine, as in eukaryotes.

Inhibits bacterial protein biosynthesis by binding to ribosomes. Specifically, binds to the complex of 23S rRNA and ribosomal protein L11 (RPLK) in the 50S ribosomal subunit. While allowing a weak binding of elongation factor G (EF-G) to the ribosome and subsequent GTP-hydrolysis, probably impairs conformational changes in both the ribosome and EF-G which are necessary for translocation. In vitro, inhibits Gram-positive bacteria S.aureus strain 209P (MIC=0.0009 ug/ml), S.aureus strain 133 (MIC=0.0019 ug/ml), S.aureus strain B3 (MIC=0.003 ug/ml), S.aureus strain Hb (MIC=0.003 ug/ml), M.citreus strain ATCC 8411 (MIC=0.0038 ug/ml), M.lysodeikticus strain ATCC 4698 (MIC=0.003 ug/ml), S.lutea strain ATCC 9341 (MIC=0.0011 ug/ml), S.faecalis strain ATCC 9790 (MIC=0.0007 ug/ml), S.viridans (MIC=0.0065 ug/ml), S.pyogenes hemolyticus strain Dig7 (MIC=0.00028 ug/ml), D.pneumoniae strain Til (MIC=0.00015 ug/ml), N.catrrhalis (MIC=0.0017 ug/ml), L.casei strain ATCC 6633 (MIC=0.003 ug/ml), B.cereus strain ATCC 6630 (MIC=0.0071 ug/ml) and various isolates of L.monocytogenes. In vitro, inhibits Gram-negative bacterium P.multocida strain A125 (MIC=0.0024 ug/ml) but not M.smegmatis strain ATCC 6630, S.typhimurium, A.aerogenes strain ATCC 8308, P.vulgaris, K.pneumoniae strain ATCC 10031, S.marcescens strain A476, P.aeruginosa strain Bass or B.bronchiseptica strain CN387. Does not inhibit Gram-negative bacterium E.coli strain ATCC 9637 but does inhibit purified ribosomes from E.coli. In vivo, has no systemic effect in mice infected with staphylococci or streptococci when applied orally or subcutaneously. Has a local effect in mice infected subcutaneously or intraperitoneally with staphylococci when applied immediately afterwards. Is not toxic to mice. The polypeptide is Nosiheptide precursor (Streptomyces actuosus).